We begin with the raw amino-acid sequence, 403 residues long: Flavohemoprotein (403 aa).

The Globin domain maps to 1-138; that stretch reads MLTQKTKDIV…LADVLMGMES (138 aa). A heme b-binding site is contributed by histidine 85. Residues tyrosine 95 and glutamate 137 each act as charge relay system in the active site. The reductase stretch occupies residues 149 to 403; the sequence is GGWKGWRTFV…EVFGPDLFAE (255 aa). One can recognise an FAD-binding FR-type domain in the interval 152–262; it reads KGWRTFVIRE…AAPYGSFHID (111 aa). FAD contacts are provided by residues tyrosine 190 and 206-209; that span reads RQYS. NADP(+) is bound at residue 275–280; sequence GVGLTP. 395–398 contributes to the FAD binding site; the sequence is VFGP.

Belongs to the globin family. Two-domain flavohemoproteins subfamily. It in the C-terminal section; belongs to the flavoprotein pyridine nucleotide cytochrome reductase family. In terms of assembly, monomer. The cofactor is FAD. Heme b serves as cofactor.

The protein resides in the cytoplasm. The enzyme catalyses 2 nitric oxide + NADPH + 2 O2 = 2 nitrate + NADP(+) + H(+). It carries out the reaction 2 nitric oxide + NADH + 2 O2 = 2 nitrate + NAD(+) + H(+). Is involved in NO detoxification in an aerobic process, termed nitric oxide dioxygenase (NOD) reaction that utilizes O(2) and NAD(P)H to convert NO to nitrate, which protects the bacterium from various noxious nitrogen compounds. Therefore, plays a central role in the inducible response to nitrosative stress. Its function is as follows. In the presence of oxygen and NADH, FHP has NADH oxidase activity, which leads to the generation of superoxide and H(2)O(2), both in vitro and in vivo, and it has been suggested that FHP might act as an amplifier of superoxide stress. Under anaerobic conditions, FHP also exhibits nitric oxide reductase and FAD reductase activities. However, all these reactions are much lower than NOD activity. In Cupriavidus necator (strain ATCC 17699 / DSM 428 / KCTC 22496 / NCIMB 10442 / H16 / Stanier 337) (Ralstonia eutropha), this protein is Flavohemoprotein (hmp).